The sequence spans 327 residues: MSDASLTKINWQPTASIQTLLKRSKIMAEIRQFFTDRGVLEVETPALSEYSVTDVHLSTFSTEFLSPFAKQAKTLHLITSPEYHMKRLLAAGSSSIFQLCRVFRNEESGKRHNPEFTMLEWYRPHFDMYRLINEVDDLLQQILDCEPIESYSYQFVFQTYVGLDPLSASRAQLVEKARKHGFACEEDENRDTLLQFLFSEIVEANIGQERPTTVYHFPSSQAALAQISSEDHRVAERFEIYYKGLELANGFHELNDAKEQIRRFERDNQLREQMNLPPQPLDMRFLAALKAGIPNCSGVALGVDRLIMLALNANHIQEVMAFGVERA.

80–82 (SPE) contributes to the substrate binding site. Residues 104–106 (RNE) and N113 each bind ATP. Y122 contributes to the substrate binding site. 246–247 (EL) contributes to the ATP binding site. E253 is a substrate binding site. G302 serves as a coordination point for ATP.

The protein belongs to the class-II aminoacyl-tRNA synthetase family. EpmA subfamily. As to quaternary structure, homodimer.

It catalyses the reaction D-beta-lysine + L-lysyl-[protein] + ATP = N(6)-((3R)-3,6-diaminohexanoyl)-L-lysyl-[protein] + AMP + diphosphate + H(+). With EpmB is involved in the beta-lysylation step of the post-translational modification of translation elongation factor P (EF-P). Catalyzes the ATP-dependent activation of (R)-beta-lysine produced by EpmB, forming a lysyl-adenylate, from which the beta-lysyl moiety is then transferred to the epsilon-amino group of a conserved specific lysine residue in EF-P. The sequence is that of Elongation factor P--(R)-beta-lysine ligase from Haemophilus ducreyi (strain 35000HP / ATCC 700724).